Consider the following 443-residue polypeptide: Crh-like protein 2 (443 aa).

Residues 1 to 20 form the signal peptide; that stretch reads MVRIGSSLLLATLAATTVSA. The GH16 domain maps to 21-306; that stretch reads ASDPPKCSQD…TVECYDPPSG (286 aa). Cysteines 56 and 67 form a disulfide. Glu-164 serves as the catalytic Nucleophile. The Proton donor role is filled by Glu-168. Glu-168 serves as a coordination point for chitin. 2 N-linked (GlcNAc...) asparagine glycosylation sites follow: Asn-194 and Asn-237. Chitin contacts are provided by Trp-257 and Thr-268. Asn-332 and Asn-359 each carry an N-linked (GlcNAc...) asparagine glycan. Composition is skewed to low complexity over residues 350–367 and 378–410; these read ASSS…SANT and EPGN…SETS. A disordered region spans residues 350–420; that stretch reads ASSSASGSAN…ASSNKNAAPS (71 aa). Residues 411–420 show a composition bias toward polar residues; it reads ASSNKNAAPS. A lipid anchor (GPI-like-anchor amidated asparagine) is attached at Asn-416. Residues 417–443 constitute a propeptide, removed in mature form; that stretch reads AAPSQNERVLNGSFFAVLVAVVALVTL. Asn-427 is a glycosylation site (N-linked (GlcNAc...) asparagine).

The protein belongs to the glycosyl hydrolase 16 family. CRH1 subfamily. The GPI-like anchor contains a phosphoceramide lipid group. The anchor position has not been determined.

The protein resides in the cell membrane. It is found in the secreted. It localises to the cell wall. The catalysed reaction is Random endo-hydrolysis of N-acetyl-beta-D-glucosaminide (1-&gt;4)-beta-linkages in chitin and chitodextrins.. Functionally, dual chitinase/transglycosylase that plays a role in cell wall architecture. Chitinase and transglycosylase activities are coupled. Required for the polysaccharide cross-linking at the septa and the cell wall. More specifically, transfers chitin to 1,6-beta-glucan in the cell wall. The sequence is that of Crh-like protein 2 from Aspergillus fumigatus (strain ATCC MYA-4609 / CBS 101355 / FGSC A1100 / Af293) (Neosartorya fumigata).